The following is a 470-amino-acid chain: 3-isopropylmalate dehydratase large subunit (470 aa).

Positions 347, 407, and 410 each coordinate [4Fe-4S] cluster.

The protein belongs to the aconitase/IPM isomerase family. LeuC type 1 subfamily. In terms of assembly, heterodimer of LeuC and LeuD. Requires [4Fe-4S] cluster as cofactor.

The catalysed reaction is (2R,3S)-3-isopropylmalate = (2S)-2-isopropylmalate. The protein operates within amino-acid biosynthesis; L-leucine biosynthesis; L-leucine from 3-methyl-2-oxobutanoate: step 2/4. Catalyzes the isomerization between 2-isopropylmalate and 3-isopropylmalate, via the formation of 2-isopropylmaleate. The polypeptide is 3-isopropylmalate dehydratase large subunit (Shewanella amazonensis (strain ATCC BAA-1098 / SB2B)).